We begin with the raw amino-acid sequence, 278 residues long: Phosphoenolpyruvate carboxylase kinase 2 (278 aa).

The 259-residue stretch at 11–269 (YQLCDEIGRG…AEDALRHSWM (259 aa)) folds into the Protein kinase domain. Residues 17–25 (IGRGRFGTI) and K40 contribute to the ATP site. Catalysis depends on D137, which acts as the Proton acceptor.

It belongs to the protein kinase superfamily. Ser/Thr protein kinase family. Expressed in flowers and roots, and at lower levels in cauline leaves. Barely detectable in rosette leaves and stems.

It catalyses the reaction L-seryl-[protein] + ATP = O-phospho-L-seryl-[protein] + ADP + H(+). The enzyme catalyses L-threonyl-[protein] + ATP = O-phospho-L-threonyl-[protein] + ADP + H(+). Functionally, calcium-independent kinase involved in light-dependent phosphoenolpyruvate carboxylase phosphorylation. This chain is Phosphoenolpyruvate carboxylase kinase 2 (PPCK2), found in Arabidopsis thaliana (Mouse-ear cress).